A 27-amino-acid polypeptide reads, in one-letter code: Cruzioseptin-14 (27 aa).

Expressed by the skin glands.

It is found in the secreted. In terms of biological role, has antimicrobial activity. The sequence is that of Cruzioseptin-14 from Cruziohyla calcarifer (Splendid leaf frog).